Here is a 2376-residue protein sequence, read N- to C-terminus: MAG2-interacting protein 2 (2376 aa).

In terms of assembly, forms a complex with MAG2, ZW10/MIP1 and MIP3 on the endoplasmic reticulum.

The protein localises to the endoplasmic reticulum membrane. In terms of biological role, required for proper maturation of seed storage proteins. Forms a complex with MAG2, ZW10/MIP1 and MIP3 on the endoplasmic reticulum that may be responsible for efficient transport of seed storage proteins. The protein is MAG2-interacting protein 2 of Arabidopsis thaliana (Mouse-ear cress).